The primary structure comprises 388 residues: GTPase Obg (388 aa).

The Obg domain maps to 1-159 (MKFVDEAVIR…RSLKLELLLL (159 aa)). The OBG-type G domain maps to 160-333 (ADVGLLGMPN…LALKLLDYIA (174 aa)). GTP contacts are provided by residues 166–173 (GMPNAGKS), 191–195 (FTTLV), 213–216 (DIPG), 283–286 (NKTD), and 314–316 (SAY). 2 residues coordinate Mg(2+): Ser-173 and Thr-193.

The protein belongs to the TRAFAC class OBG-HflX-like GTPase superfamily. OBG GTPase family. Monomer. Requires Mg(2+) as cofactor.

It localises to the cytoplasm. An essential GTPase which binds GTP, GDP and possibly (p)ppGpp with moderate affinity, with high nucleotide exchange rates and a fairly low GTP hydrolysis rate. Plays a role in control of the cell cycle, stress response, ribosome biogenesis and in those bacteria that undergo differentiation, in morphogenesis control. The polypeptide is GTPase Obg (Shewanella putrefaciens (strain CN-32 / ATCC BAA-453)).